Consider the following 339-residue polypeptide: Methionine import ATP-binding protein MetN 2 (339 aa).

One can recognise an ABC transporter domain in the interval 2 to 241 (ISFNNVSKVY…PKTTTTQNFV (240 aa)). 38–45 (GFSGAGKS) contacts ATP.

It belongs to the ABC transporter superfamily. Methionine importer (TC 3.A.1.24) family. In terms of assembly, the complex is composed of two ATP-binding proteins (MetN), two transmembrane proteins (MetI) and a solute-binding protein (MetQ).

The protein localises to the cell membrane. The catalysed reaction is L-methionine(out) + ATP + H2O = L-methionine(in) + ADP + phosphate + H(+). It catalyses the reaction D-methionine(out) + ATP + H2O = D-methionine(in) + ADP + phosphate + H(+). Functionally, part of the ABC transporter complex MetNIQ involved in methionine import. Responsible for energy coupling to the transport system. This is Methionine import ATP-binding protein MetN 2 from Bacillus anthracis.